We begin with the raw amino-acid sequence, 470 residues long: Poly(A) polymerase catalytic subunit (470 aa).

Catalysis depends on residues D192 and D194.

It belongs to the poxviridae poly(A) polymerase catalytic subunit family. Heterodimer of a large (catalytic) subunit and a small (regulatory) subunit.

It carries out the reaction RNA(n) + ATP = RNA(n)-3'-adenine ribonucleotide + diphosphate. Its function is as follows. Polymerase that creates the 3'-poly(A) tail of mRNA's. In Deerpox virus (strain Mule deer/United States/W-848-83/1983) (DPV), this protein is Poly(A) polymerase catalytic subunit (PAPL).